We begin with the raw amino-acid sequence, 1323 residues long: DNA-directed RNA polymerase subunit beta' (1323 aa).

The Zn(2+) site is built by cysteine 60, cysteine 62, cysteine 75, and cysteine 78. Aspartate 535, aspartate 537, and aspartate 539 together coordinate Mg(2+). Residues cysteine 894, cysteine 977, cysteine 984, and cysteine 987 each contribute to the Zn(2+) site.

The protein belongs to the RNA polymerase beta' chain family. The RNAP catalytic core consists of 2 alpha, 1 beta, 1 beta' and 1 omega subunit. When a sigma factor is associated with the core the holoenzyme is formed, which can initiate transcription. It depends on Mg(2+) as a cofactor. Requires Zn(2+) as cofactor.

It catalyses the reaction RNA(n) + a ribonucleoside 5'-triphosphate = RNA(n+1) + diphosphate. Functionally, DNA-dependent RNA polymerase catalyzes the transcription of DNA into RNA using the four ribonucleoside triphosphates as substrates. The chain is DNA-directed RNA polymerase subunit beta' from Corynebacterium urealyticum (strain ATCC 43042 / DSM 7109).